The chain runs to 32 residues: Beta-1,4-galactosyltransferase 1 (32 aa).

The protein belongs to the glycosyltransferase 7 family. Mn(2+) serves as cofactor. In terms of processing, the soluble form derives from the membrane form by proteolytic processing.

Its subcellular location is the golgi apparatus. It is found in the golgi stack membrane. It localises to the secreted. The protein localises to the cell membrane. The protein resides in the cell projection. Its subcellular location is the filopodium. It catalyses the reaction D-glucose + UDP-alpha-D-galactose = lactose + UDP + H(+). The enzyme catalyses an N-acetyl-beta-D-glucosaminyl derivative + UDP-alpha-D-galactose = a beta-D-galactosyl-(1-&gt;4)-N-acetyl-beta-D-glucosaminyl derivative + UDP + H(+). It carries out the reaction N-acetyl-D-glucosamine + UDP-alpha-D-galactose = beta-D-galactosyl-(1-&gt;4)-N-acetyl-D-glucosamine + UDP + H(+). The catalysed reaction is a beta-D-GlcNAc-(1-&gt;3)-beta-D-Gal-(1-&gt;4)-beta-D-Glc-(1&lt;-&gt;1)-Cer(d18:1(4E)) + UDP-alpha-D-galactose = a neolactoside nLc4Cer(d18:1(4E)) + UDP + H(+). It catalyses the reaction a beta-D-glucosylceramide + UDP-alpha-D-galactose = a beta-D-galactosyl-(1-&gt;4)-beta-D-glucosyl-(1&lt;-&gt;1)-ceramide + UDP + H(+). The enzyme catalyses a neolactoside IV(3)-beta-GlcNAc-nLc4Cer + UDP-alpha-D-galactose = a neolactoside nLc6Cer + UDP + H(+). Its pathway is protein modification; protein glycosylation. This protein is responsible for the synthesis of complex-type N-linked oligosaccharides in many glycoproteins as well as the carbohydrate moieties of glycolipids. The chain is Beta-1,4-galactosyltransferase 1 from Rattus norvegicus (Rat).